We begin with the raw amino-acid sequence, 324 residues long: Uric acid degradation bifunctional protein TTL (324 aa).

An N-acetylalanine modification is found at Ala2. The required for BRI1-binding stretch occupies residues Ala2 to Leu29. Positions Ala2–Lys161 are OHCU decarboxylase. Catalysis depends on His58, which acts as the Proton donor; for OHCU decarboxylase activity. His58, Pro59, Glu80, Phe111, Ile113, and Ala115 together coordinate (S)-allantoin. Residues Lys178–Ser324 are HIU hydrolase. The Internal peroxisomal targeting signal (PTS2) motif lies at Arg182–Leu190.

It in the N-terminal section; belongs to the OHCU decarboxylase family. In the C-terminal section; belongs to the transthyretin family. 5-hydroxyisourate hydrolase subfamily. As to quaternary structure, homodimer. Forms tetramers. Interacts with BRI1 in a kinase-dependent manner. Interacts with B1L. Post-translationally, phosphorylated by BRI1 in vitro. Expressed ubiquitously with highest levels in flowers buds and elongating inflorescences. As to expression, mainly expressed in stems and leaves, and, to a lower extent, in flowers, flower buds and seedlings. In terms of tissue distribution, strongly expressed in flower buds and leaves, to a lower extent in stems, and at low levels in seedlings and flowers.

The protein localises to the cell membrane. It localises to the peroxisome. The protein resides in the cytoplasm. Its subcellular location is the cytosol. It carries out the reaction 5-hydroxyisourate + H2O = 5-hydroxy-2-oxo-4-ureido-2,5-dihydro-1H-imidazole-5-carboxylate + H(+). The enzyme catalyses 5-hydroxy-2-oxo-4-ureido-2,5-dihydro-1H-imidazole-5-carboxylate + H(+) = (S)-allantoin + CO2. It participates in purine metabolism; urate degradation; (S)-allantoin from urate: step 2/3. It functions in the pathway purine metabolism; urate degradation; (S)-allantoin from urate: step 3/3. Its function is as follows. Involved in the last two steps of the degradation of uric acid, i.e. the hydrolysis of 5-hydroxyisourate (HIU) to 2-oxo-4-hydroxy-4-carboxy-5-ureidoimidazoline (OHCU) and its stereoselective decarboxylation to (S)-allantoin, a major ureide compound. Might function as a negative regulator to modulate brassinosteroid-mediated plant growth. Together with B1L, prevents plant growth and development, but by opposition to B1L, negatively regulates cold tolerance, probably in a brassinosteroid (BR) and allantoin-dependent manner. The polypeptide is Uric acid degradation bifunctional protein TTL (Arabidopsis thaliana (Mouse-ear cress)).